The chain runs to 262 residues: NADP-dependent mannitol dehydrogenase (262 aa).

NADP(+) is bound by residues isoleucine 23, aspartate 69, asparagine 96, and arginine 129. Serine 149 (proton donor) is an active-site residue. Residues tyrosine 169, lysine 173, valine 202, threonine 204, and glutamine 206 each contribute to the NADP(+) site. Tyrosine 169 functions as the Proton acceptor in the catalytic mechanism. The active-site Lowers pKa of active site Tyr is lysine 173.

Belongs to the short-chain dehydrogenases/reductases (SDR) family. In terms of assembly, homotetramer.

The catalysed reaction is D-mannitol + NADP(+) = D-fructose + NADPH + H(+). The chain is NADP-dependent mannitol dehydrogenase (mtdH) from Agaricus bisporus (White button mushroom).